We begin with the raw amino-acid sequence, 185 residues long: C-phycoerythrin beta chain (185 aa).

(2R,3E)-phycoerythrobilin is bound by residues Cys49 and Cys60. Asn71 carries the post-translational modification N4-methylasparagine. Positions 81 and 166 each coordinate (2R,3E)-phycoerythrobilin.

Belongs to the phycobiliprotein family. As to quaternary structure, heterodimer of an alpha and a beta chain. Contains three covalently linked bilin chromophores.

The protein localises to the cellular thylakoid membrane. Functionally, light-harvesting photosynthetic bile pigment-protein from the phycobiliprotein complex. This is C-phycoerythrin beta chain (cpeB) from Pseudanabaena tenuis (strain PCC 7409).